The following is a 189-amino-acid chain: Flavin prenyltransferase UbiX (189 aa).

FMN-binding positions include 10–12 (GAS), serine 36, 91–94 (STNT), and arginine 126. Tyrosine 156 and lysine 172 together coordinate dimethylallyl phosphate.

The protein belongs to the UbiX/PAD1 family.

It carries out the reaction dimethylallyl phosphate + FMNH2 = prenylated FMNH2 + phosphate. Functionally, flavin prenyltransferase that catalyzes the synthesis of the prenylated FMN cofactor (prenyl-FMN) for 4-hydroxy-3-polyprenylbenzoic acid decarboxylase UbiD. The prenyltransferase is metal-independent and links a dimethylallyl moiety from dimethylallyl monophosphate (DMAP) to the flavin N5 and C6 atoms of FMN. The protein is Flavin prenyltransferase UbiX of Aquifex aeolicus (strain VF5).